The sequence spans 968 residues: MPFTLGQRWISDTESELGLGAVVAVDARTVTLLFPSTGENRLYARSDSPVTRVMFNPGDTITSHDGWQMQVEEVKEENGLLTYIGTRLDTEESGVALREVFLDSKLVFSKPQDRLFAGQIDRMDRFALRYRARKYSSEQFRMPYSGLRGQRTSLIPHQLNIAHDVGRRHAPRVLLADEVGLGKTIEAGMILHQQLLSGAAERVLIIVPETLQHQWLVEMLRRFNLRFALFDDERYAEAQHDAYNPFDTEQLVICSLDFARRSKQRLEHLCEAEWDLLVVDEAHHLVWSEDAPSREYQAIEQLAEHVPGVLLLTATPEQLGMESHFARLRLLDPNRFHDFAQFVEEQKNYRPVADAVAMLLAGNKLSNDELNMLGEMIGEQDIEPLLQAANSDSEDAQSARQELVSMLMDRHGTSRVLFRNTRNGVKGFPKRELHTIKLPLPTQYQTAIKVSGIMGARKSAEDRARDMLYPERIYQEFEGDNATWWNFDPRVEWLMGYLTSHRSQKVLVICAKAATALQLEQVLREREGIRAAVFHEGMSIIERDRAAAWFAEEDTGAQVLLCSEIGSEGRNFQFASHMVMFDLPFNPDLLEQRIGRLDRIGQAHDIQIHVPYLEKTAQSVLVRWYHEGLDAFEHTCPTGRTIYDSVYNDLINYLASPDETEGFDDLIKNCREQHEALKAQLEQGRDRLLEIHSNGGEKAQALAESIEEQDDDTNLIAFAMNLFDIIGINQDDRGDNIIVLTPSDHMLVPDFPGLSEDGITITFDREVALAREDAQFITWEHPLIRNGLDLILSGDTGSSTISLLKNKALPVGTLLVELIYVVEAQAPKQLQLNRFLPPTPVRMLLDKNGNNLAAQVEFETFNRQLNAVNRYTGSKLVNAVQQDVHAILQLGEAQIEKSARALIDAARNEADEKLSAELSRLEALRAVNPNIRDDELTAIESNRQQVMESLDQAGWRLDALRLIVVTHQ.

Residues 164 to 334 form the Helicase ATP-binding domain; that stretch reads DVGRRHAPRV…FARLRLLDPN (171 aa). 177–184 contacts ATP; that stretch reads DEVGLGKT. Positions 280 to 283 match the DEAH box motif; it reads DEAH. The 173-residue stretch at 490 to 662 folds into the Helicase C-terminal domain; sequence RVEWLMGYLT…YLASPDETEG (173 aa).

It belongs to the SNF2/RAD54 helicase family. RapA subfamily. In terms of assembly, interacts with the RNAP. Has a higher affinity for the core RNAP than for the holoenzyme. Its ATPase activity is stimulated by binding to RNAP.

In terms of biological role, transcription regulator that activates transcription by stimulating RNA polymerase (RNAP) recycling in case of stress conditions such as supercoiled DNA or high salt concentrations. Probably acts by releasing the RNAP, when it is trapped or immobilized on tightly supercoiled DNA. Does not activate transcription on linear DNA. Probably not involved in DNA repair. The polypeptide is RNA polymerase-associated protein RapA (Escherichia coli O81 (strain ED1a)).